Here is a 41-residue protein sequence, read N- to C-terminus: MKIKNSLKSLKARHRDNRLVRRKGRIYIINKLNPRYKARQG.

This sequence belongs to the bacterial ribosomal protein bL36 family.

The polypeptide is Large ribosomal subunit protein bL36 (Rhizobium etli (strain CIAT 652)).